Here is a 163-residue protein sequence, read N- to C-terminus: Transcriptional repressor NrdR (163 aa).

The segment at 3 to 34 (CPFCAHPEDKVVDSRESKEGESIRRRRECLKC) is a zinc-finger region. The 91-residue stretch at 49–139 (YMVVKKDGRR…VYLDFKDVRE (91 aa)) folds into the ATP-cone domain.

It belongs to the NrdR family. It depends on Zn(2+) as a cofactor.

In terms of biological role, negatively regulates transcription of bacterial ribonucleotide reductase nrd genes and operons by binding to NrdR-boxes. The polypeptide is Transcriptional repressor NrdR (Koribacter versatilis (strain Ellin345)).